A 406-amino-acid chain; its full sequence is Tryptophan synthase beta chain (406 aa).

Lys-95 is modified (N6-(pyridoxal phosphate)lysine).

Belongs to the TrpB family. In terms of assembly, tetramer of two alpha and two beta chains. Pyridoxal 5'-phosphate is required as a cofactor.

It carries out the reaction (1S,2R)-1-C-(indol-3-yl)glycerol 3-phosphate + L-serine = D-glyceraldehyde 3-phosphate + L-tryptophan + H2O. It participates in amino-acid biosynthesis; L-tryptophan biosynthesis; L-tryptophan from chorismate: step 5/5. In terms of biological role, the beta subunit is responsible for the synthesis of L-tryptophan from indole and L-serine. The polypeptide is Tryptophan synthase beta chain (Azotobacter vinelandii (strain DJ / ATCC BAA-1303)).